Here is a 310-residue protein sequence, read N- to C-terminus: Aspartate carbamoyltransferase catalytic subunit 2 (310 aa).

Positions 55 and 56 each coordinate carbamoyl phosphate. Residue Lys85 coordinates L-aspartate. Positions 106, 134, and 137 each coordinate carbamoyl phosphate. The L-aspartate site is built by Arg167 and Arg228. Carbamoyl phosphate-binding residues include Leu266 and Pro267.

This sequence belongs to the aspartate/ornithine carbamoyltransferase superfamily. ATCase family. In terms of assembly, heterododecamer (2C3:3R2) of six catalytic PyrB chains organized as two trimers (C3), and six regulatory PyrI chains organized as three dimers (R2).

It carries out the reaction carbamoyl phosphate + L-aspartate = N-carbamoyl-L-aspartate + phosphate + H(+). The protein operates within pyrimidine metabolism; UMP biosynthesis via de novo pathway; (S)-dihydroorotate from bicarbonate: step 2/3. Catalyzes the condensation of carbamoyl phosphate and aspartate to form carbamoyl aspartate and inorganic phosphate, the committed step in the de novo pyrimidine nucleotide biosynthesis pathway. The polypeptide is Aspartate carbamoyltransferase catalytic subunit 2 (Shewanella halifaxensis (strain HAW-EB4)).